Reading from the N-terminus, the 522-residue chain is DNA damage-binding protein cmr1 (522 aa).

Residues 34–47 (VFTPTLPNRATGSQ) are compositionally biased toward polar residues. 2 disordered regions span residues 34–89 (VFTP…KRKA) and 217–239 (QEKP…DPVL). Residues 49–59 (KTKKKPAPKKV) show a composition bias toward basic residues. Residues 182–223 (LTPERVYTMTFHPSETKPLIFAGDKMGHLGILDASQEKPTSV) form a WD 1 repeat. A compositionally biased stretch (acidic residues) spans 226–236 (EDEDEEDDDPD). WD repeat units follow at residues 244 to 284 (PHTR…SVER), 294 to 331 (VPLS…QGSV), 336 to 376 (LSEK…RREP), 381 to 422 (EHQS…ASWK), 445 to 488 (GRWV…LAQL), and 491 to 522 (DGIT…CLWM).

The protein belongs to the WD repeat DDB2/WDR76 family.

DNA-binding protein that binds to both single- and double-stranded DNA. Binds preferentially to UV-damaged DNA. May be involved in DNA-metabolic processes. This chain is DNA damage-binding protein cmr1, found in Aspergillus oryzae (strain ATCC 42149 / RIB 40) (Yellow koji mold).